The primary structure comprises 443 residues: Xaa-Pro dipeptidase (443 aa).

5 residues coordinate Mn(2+): Asp-246, Asp-257, His-339, Glu-384, and Glu-423.

It belongs to the peptidase M24B family. Bacterial-type prolidase subfamily. Requires Mn(2+) as cofactor.

The enzyme catalyses Xaa-L-Pro dipeptide + H2O = an L-alpha-amino acid + L-proline. Its function is as follows. Splits dipeptides with a prolyl residue in the C-terminal position. The polypeptide is Xaa-Pro dipeptidase (Escherichia coli (strain 55989 / EAEC)).